Here is an 83-residue protein sequence, read N- to C-terminus: Small ribosomal subunit protein eS21 (83 aa).

Belongs to the eukaryotic ribosomal protein eS21 family. In terms of assembly, component of the 40S small ribosomal subunit. Interacts with sta.

It is found in the cytoplasm. The protein resides in the cytosol. Its subcellular location is the rough endoplasmic reticulum. In terms of biological role, may be an associated component of the ribosome rather than a core structural subunit. May act as a translation initiation factor. Has a role in regulation of cell proliferation in the hematopoietic organs and the imaginal disks of larva. The polypeptide is Small ribosomal subunit protein eS21 (RpS21) (Drosophila erecta (Fruit fly)).